The chain runs to 153 residues: Large ribosomal subunit protein uL15 (153 aa).

The tract at residues 1–42 (MKLNTIKPGIGSAKPKRRVGRGIGSGLGKTCGRGHKGQKSRA) is disordered. Gly residues predominate over residues 21-31 (RGIGSGLGKTC).

The protein belongs to the universal ribosomal protein uL15 family. In terms of assembly, part of the 50S ribosomal subunit.

Binds to the 23S rRNA. In Nitrosomonas europaea (strain ATCC 19718 / CIP 103999 / KCTC 2705 / NBRC 14298), this protein is Large ribosomal subunit protein uL15.